A 432-amino-acid polypeptide reads, in one-letter code: MPIGKIESLDHEARGITRQEGKAIFVDGALPGETVEYASFRRKSKFELAHLVHVIKPSTARVEPCCPHFGVCGGCAMQHMEPSAQVAAKQRVLEDSLWHIGRIRPETMLPPIQGEPWGYRHRARLAVRRVSKSGGMLIGFHEWRSSYIADIRSCAILPPHVSALLMPMRELFAALSIAERIREVDVAVGEHCTALLLRILDPLTPADERLLCDFVDRNDVVFYLQPKGPDTAFRFYPSGGPRLSYTLPEFGLEFDFKPTDFTQVNHAVNRVLVRRALRLLDPQPSERIADMFCGLGNFTLPIARSGATVIGVEGSAALVRRGRESAAANGLADHVEFGVANLFECTEQSLAALGRFDKMLIDPPREGAVELVRAIGKDAPKRIVYVSCNPGTLARDAAVLVTEKGYRFVSAGAVNMFPHTAHVESIAVFELP.

In terms of domain architecture, TRAM spans 1-53 (MPIGKIESLDHEARGITRQEGKAIFVDGALPGETVEYASFRRKSKFELAHLVH). [4Fe-4S] cluster is bound by residues C66, C72, C75, and C154. S-adenosyl-L-methionine-binding residues include Q263, F292, N297, E313, N341, and D362. C388 functions as the Nucleophile in the catalytic mechanism.

Belongs to the class I-like SAM-binding methyltransferase superfamily. RNA M5U methyltransferase family. RlmD subfamily.

It catalyses the reaction uridine(1939) in 23S rRNA + S-adenosyl-L-methionine = 5-methyluridine(1939) in 23S rRNA + S-adenosyl-L-homocysteine + H(+). Functionally, catalyzes the formation of 5-methyl-uridine at position 1939 (m5U1939) in 23S rRNA. The chain is 23S rRNA (uracil(1939)-C(5))-methyltransferase RlmD from Dechloromonas aromatica (strain RCB).